A 1711-amino-acid chain; its full sequence is Nuclear pore complex protein Nup214 (1711 aa).

8 tandem repeats follow at residues 472–473 (FG), 486–487 (FG), 497–498 (FG), 511–512 (FG), 514–515 (FG), 535–536 (FG), 588–589 (TS), and 598–599 (SL). The tract at residues 472–1703 (FGAAAAKAPA…NSNAQKPAFG (1232 aa)) is 45 X 2 AA repeats of F-G. Leucine-zipper regions lie at residues 650–672 (LDDLQELNEQAKDVEFELDVQGL) and 767–788 (LTRLQNLTSNQRIVQNNIKSKL). The disordered stretch occupies residues 886-905 (KPATANKYTQAAVAPPSPPD). Repeat unit 9 spans residues 1009–1010 (FG). A disordered region spans residues 1012–1081 (GSPAVAAPTP…NKSFGFGGFT (70 aa)). Basic and acidic residues-rich tracts occupy residues 1037 to 1051 (TKPKEQKAAESKEFK) and 1058 to 1072 (EESKVPQKPKAETEN). An interaction with emb region spans residues 1044-1711 (AAESKEFKAV…FGGSSFMNYR (668 aa)). 8 consecutive repeat copies span residues 1075–1076 (FG), 1077–1078 (FG), 1097–1098 (FG), 1106–1107 (FG), 1135–1136 (FG), 1218–1219 (FG), 1229–1230 (FG), and 1240–1241 (FG). Positions 1251–1261 (TSVTEANNKTD) are enriched in polar residues. Positions 1251-1270 (TSVTEANNKTDPISTTPSAI) are disordered. 27 tandem repeats follow at residues 1356–1357 (FG), 1388–1389 (FG), 1399–1400 (FG), 1434–1435 (FG), 1449–1450 (FG), 1458–1459 (FG), 1472–1473 (FG), 1481–1482 (FG), 1487–1488 (FG), 1507–1508 (FG), 1512–1513 (FG), 1539–1540 (FG), 1547–1548 (FG), 1562–1563 (FG), 1571–1572 (FG), 1584–1585 (FG), 1588–1589 (FG), 1601–1602 (FG), 1617–1618 (FG), 1623–1624 (FG), 1629–1630 (FG), 1635–1636 (FG), 1641–1642 (FG), 1647–1648 (FG), 1650–1651 (FG), 1662–1663 (FG), and 1686–1687 (FG). Disordered stretches follow at residues 1533–1552 (SPQASPFGGGGNSIFGSPAT) and 1557–1614 (SGGS…TTTP). Gly residues-rich tracts occupy residues 1560-1572 (SIFGGGSSSGGFG) and 1582-1595 (GGFGGGFGQGGGGS). Residues 1596 to 1614 (VAQTGFGSPQAPQQQTTTP) show a composition bias toward low complexity. The segment covering 1688–1698 (NLAQTGNSNAQ) has biased composition (polar residues). The interval 1688–1711 (NLAQTGNSNAQKPAFGGSSFMNYR) is disordered. Copy 45 of the repeat occupies 1702–1703 (FG).

In terms of assembly, component of the nuclear pore complex. Interacts with mbo/Nup88 and (via C-terminus) with emb to attenuate emb-mediated protein export.

It localises to the nucleus. The protein localises to the nuclear pore complex. Its subcellular location is the nucleus membrane. In terms of biological role, part of the nuclear pore complex. Serves as a docking site in the receptor-mediated import of substrates across the nuclear pore complex including emb, RanGAP and phosphorylated Mad. Protects mbo/Nup88 from proteasomal degradation at the nuclear pore. Together with mbo/Nup88, sequesters emb in the cytoplasm and thereby attenuates nuclear export signal (NES)-mediated nuclear export. Together with mbo/Nup88, required for the nuclear import of the Rel family transcription factors dorsal (dl) and Dorsal-related immunity factor (Dif) and the activation of an immune response. This is Nuclear pore complex protein Nup214 from Drosophila melanogaster (Fruit fly).